Reading from the N-terminus, the 230-residue chain is AA9 family lytic polysaccharide monooxygenase H (230 aa).

Residues 1–17 (MKTLSAGLLALASAASA) form the signal peptide. Positions 18 and 89 each coordinate Cu(2+). Cysteines 59 and 178 form a disulfide. O2 contacts are provided by His164 and Gln173. Tyr175 is a binding site for Cu(2+).

It belongs to the polysaccharide monooxygenase AA9 family. The cofactor is Cu(2+).

The protein resides in the secreted. It catalyses the reaction [(1-&gt;4)-beta-D-glucosyl]n+m + reduced acceptor + O2 = 4-dehydro-beta-D-glucosyl-[(1-&gt;4)-beta-D-glucosyl]n-1 + [(1-&gt;4)-beta-D-glucosyl]m + acceptor + H2O.. Lytic polysaccharide monooxygenase (LPMO) that depolymerizes crystalline and amorphous polysaccharides via the oxidation of scissile alpha- or beta-(1-4)-glycosidic bonds, yielding primarly C1 oxidation products. Catalysis by LPMOs requires the reduction of the active-site copper from Cu(II) to Cu(I) by a reducing agent and H(2)O(2) or O(2) as a cosubstrate. Active on hemicelluloses, including xylan, glucomannan, and xyloglucan. Preferentially cleaves residual xylan in phosphoric acid-swollen cellulose (PASC). Moreover, when exposed to cellulose-xylan blends, shows a preference for xylan and for releasing oxidized xylooligosaccharides. Has no activity on ivory nut mannan (INM), a linear beta-1,4-linked mannan without substitutions. The sequence is that of AA9 family lytic polysaccharide monooxygenase H from Malbranchea cinnamomea (Thermophilic fungus).